The following is a 457-amino-acid chain: Siroheme synthase (457 aa).

The segment at 1-204 (MDHLPIFCQL…ADEKAVNATT (204 aa)) is precorrin-2 dehydrogenase /sirohydrochlorin ferrochelatase. NAD(+) is bound by residues 22-23 (DV) and 43-44 (LT). The residue at position 128 (serine 128) is a Phosphoserine. The interval 216 to 457 (GEVVLVGAGP…RDKLNWFSNH (242 aa)) is uroporphyrinogen-III C-methyltransferase. Proline 225 contacts S-adenosyl-L-methionine. Catalysis depends on aspartate 248, which acts as the Proton acceptor. The Proton donor role is filled by lysine 270. Residues 301 to 303 (GGD), isoleucine 306, 331 to 332 (TA), methionine 382, and glycine 411 each bind S-adenosyl-L-methionine.

It in the N-terminal section; belongs to the precorrin-2 dehydrogenase / sirohydrochlorin ferrochelatase family. The protein in the C-terminal section; belongs to the precorrin methyltransferase family.

It catalyses the reaction uroporphyrinogen III + 2 S-adenosyl-L-methionine = precorrin-2 + 2 S-adenosyl-L-homocysteine + H(+). The enzyme catalyses precorrin-2 + NAD(+) = sirohydrochlorin + NADH + 2 H(+). It carries out the reaction siroheme + 2 H(+) = sirohydrochlorin + Fe(2+). Its pathway is cofactor biosynthesis; adenosylcobalamin biosynthesis; precorrin-2 from uroporphyrinogen III: step 1/1. The protein operates within cofactor biosynthesis; adenosylcobalamin biosynthesis; sirohydrochlorin from precorrin-2: step 1/1. It participates in porphyrin-containing compound metabolism; siroheme biosynthesis; precorrin-2 from uroporphyrinogen III: step 1/1. It functions in the pathway porphyrin-containing compound metabolism; siroheme biosynthesis; siroheme from sirohydrochlorin: step 1/1. Its pathway is porphyrin-containing compound metabolism; siroheme biosynthesis; sirohydrochlorin from precorrin-2: step 1/1. Functionally, multifunctional enzyme that catalyzes the SAM-dependent methylations of uroporphyrinogen III at position C-2 and C-7 to form precorrin-2 via precorrin-1. Then it catalyzes the NAD-dependent ring dehydrogenation of precorrin-2 to yield sirohydrochlorin. Finally, it catalyzes the ferrochelation of sirohydrochlorin to yield siroheme. The polypeptide is Siroheme synthase (Salmonella typhi).